The following is a 675-amino-acid chain: DNA ligase (675 aa).

NAD(+) is bound by residues 35–39 (DAVYD), 84–85 (SL), and Glu-118. The active-site N6-AMP-lysine intermediate is Lys-120. Residues Arg-141, Glu-178, Lys-295, and Lys-319 each contribute to the NAD(+) site. The Zn(2+) site is built by Cys-413, Cys-416, Cys-431, and Cys-436. The 78-residue stretch at 598-675 (GAIGALTGQT…DEAELKALLS (78 aa)) folds into the BRCT domain.

The protein belongs to the NAD-dependent DNA ligase family. LigA subfamily. It depends on Mg(2+) as a cofactor. Requires Mn(2+) as cofactor.

It carries out the reaction NAD(+) + (deoxyribonucleotide)n-3'-hydroxyl + 5'-phospho-(deoxyribonucleotide)m = (deoxyribonucleotide)n+m + AMP + beta-nicotinamide D-nucleotide.. DNA ligase that catalyzes the formation of phosphodiester linkages between 5'-phosphoryl and 3'-hydroxyl groups in double-stranded DNA using NAD as a coenzyme and as the energy source for the reaction. It is essential for DNA replication and repair of damaged DNA. In Synechococcus sp. (strain RCC307), this protein is DNA ligase.